Consider the following 190-residue polypeptide: Probable chemoreceptor glutamine deamidase CheD (190 aa).

Belongs to the CheD family.

It carries out the reaction L-glutaminyl-[protein] + H2O = L-glutamyl-[protein] + NH4(+). Its function is as follows. Probably deamidates glutamine residues to glutamate on methyl-accepting chemotaxis receptors (MCPs), playing an important role in chemotaxis. The protein is Probable chemoreceptor glutamine deamidase CheD of Acidiphilium cryptum (strain JF-5).